A 678-amino-acid chain; its full sequence is Dol-P-Man:Man(7)GlcNAc(2)-PP-Dol alpha-1,6-mannosyltransferase (678 aa).

11 consecutive transmembrane segments (helical) span residues 1–21 (MDIL…FTKV), 56–76 (FIGP…FETL), 81–101 (FWAQ…AWNS), 109–129 (IYGV…FHFM), 133–153 (TRPL…AYWL), 168–188 (ILVF…VSLL), 200–220 (VALP…SFFW), 252–272 (FYSA…IGVA), 279–299 (PLVL…HKEL), 301–321 (FIIY…QRIW), and 334–354 (ALAC…LLVI).

Belongs to the glycosyltransferase 22 family.

The protein resides in the endoplasmic reticulum membrane. The catalysed reaction is an alpha-D-Man-(1-&gt;2)-alpha-D-Man-(1-&gt;2)-alpha-D-Man-(1-&gt;3)-[alpha-D-Man-(1-&gt;2)-alpha-D-Man-(1-&gt;3)-alpha-D-Man-(1-&gt;6)]-beta-D-Man-(1-&gt;4)-beta-D-GlcNAc-(1-&gt;4)-alpha-D-GlcNAc-diphospho-di-trans,poly-cis-dolichol + a di-trans,poly-cis-dolichyl beta-D-mannosyl phosphate = an alpha-D-Man-(1-&gt;2)-alpha-D-Man-(1-&gt;2)-alpha-D-Man-(1-&gt;3)-[alpha-D-Man-(1-&gt;2)-alpha-D-Man-(1-&gt;3)-[alpha-D-Man-(1-&gt;6)]-alpha-D-Man-(1-&gt;6)]-beta-D-Man-(1-&gt;4)-beta-D-GlcNAc-(1-&gt;4)-alpha-D-GlcNAc-diphospho-di-trans,poly-cis-dolichol + a di-trans,poly-cis-dolichyl phosphate + H(+). The protein operates within protein modification; protein glycosylation. In terms of biological role, mannosyltransferase that operates in the biosynthetic pathway of dolichol-linked oligosaccharides, the glycan precursors employed in protein asparagine (N)-glycosylation. The assembly of dolichol-linked oligosaccharides begins on the cytosolic side of the endoplasmic reticulum membrane and finishes in its lumen. The sequential addition of sugars to dolichol pyrophosphate produces dolichol-linked oligosaccharides containing fourteen sugars, including two GlcNAcs, nine mannoses and three glucoses. Once assembled, the oligosaccharide is transferred from the lipid to nascent proteins by oligosaccharyltransferases. In the lumen of the endoplasmic reticulum, adds the eighth mannose residue in an alpha-1,6 linkage onto Man(7)GlcNAc(2)-PP-dolichol to produce Man(8)GlcNAc(2)-PP-dolichol. The polypeptide is Dol-P-Man:Man(7)GlcNAc(2)-PP-Dol alpha-1,6-mannosyltransferase (Drosophila melanogaster (Fruit fly)).